Consider the following 100-residue polypeptide: DNA-binding protein HU (100 aa).

This sequence belongs to the bacterial histone-like protein family.

In terms of biological role, histone-like DNA-binding protein which is capable of wrapping DNA to stabilize it, and thus to prevent its denaturation under extreme environmental conditions. The polypeptide is DNA-binding protein HU (hup) (Synechocystis sp. (strain ATCC 27184 / PCC 6803 / Kazusa)).